Here is a 373-residue protein sequence, read N- to C-terminus: Dual-specificity RNA methyltransferase RlmN (373 aa).

E101 serves as the catalytic Proton acceptor. The Radical SAM core domain maps to 107 to 350; that stretch reads ENKRTTLCVS…TIIRKIRGAD (244 aa). An intrachain disulfide couples C114 to C355. [4Fe-4S] cluster-binding residues include C121, C125, and C128. S-adenosyl-L-methionine-binding positions include 179-180, S211, 233-235, and N312; these read GE and SLH. C355 acts as the S-methylcysteine intermediate in catalysis.

Belongs to the radical SAM superfamily. RlmN family. [4Fe-4S] cluster serves as cofactor.

Its subcellular location is the cytoplasm. It catalyses the reaction adenosine(2503) in 23S rRNA + 2 reduced [2Fe-2S]-[ferredoxin] + 2 S-adenosyl-L-methionine = 2-methyladenosine(2503) in 23S rRNA + 5'-deoxyadenosine + L-methionine + 2 oxidized [2Fe-2S]-[ferredoxin] + S-adenosyl-L-homocysteine. The enzyme catalyses adenosine(37) in tRNA + 2 reduced [2Fe-2S]-[ferredoxin] + 2 S-adenosyl-L-methionine = 2-methyladenosine(37) in tRNA + 5'-deoxyadenosine + L-methionine + 2 oxidized [2Fe-2S]-[ferredoxin] + S-adenosyl-L-homocysteine. Its function is as follows. Specifically methylates position 2 of adenine 2503 in 23S rRNA and position 2 of adenine 37 in tRNAs. m2A2503 modification seems to play a crucial role in the proofreading step occurring at the peptidyl transferase center and thus would serve to optimize ribosomal fidelity. The chain is Dual-specificity RNA methyltransferase RlmN from Blochmanniella pennsylvanica (strain BPEN).